The chain runs to 280 residues: MAPGTGRDFHLHLVSDSTGETLITVSRAVTAQYAGVTPIEHVYPLVRSEKQLDRVLAEIEEAPGIVLFTLLEKDVAVRLEARCQEINCPSLSIIGPVMQLFQAYLGADTTGRVGAQHTLNADYFKRIDALNYTMMHDDGQHVESLEEADVVLVGVSRTSKTPTSVYLANRGTRTANVPLVPGIAIPRQLETLKNPLVVSLHAAPERLIQVRQNRLLSIGAGPGNEAYIDRQSVTEEVIHARRLSVKHDWAQLDVTRRSIEETAAAIMKLFADRRRQRRPD.

ADP is bound at residue 154–161 (GVSRTSKT).

The protein belongs to the pyruvate, phosphate/water dikinase regulatory protein family. PDRP subfamily.

The enzyme catalyses N(tele)-phospho-L-histidyl/L-threonyl-[pyruvate, phosphate dikinase] + ADP = N(tele)-phospho-L-histidyl/O-phospho-L-threonyl-[pyruvate, phosphate dikinase] + AMP + H(+). The catalysed reaction is N(tele)-phospho-L-histidyl/O-phospho-L-threonyl-[pyruvate, phosphate dikinase] + phosphate + H(+) = N(tele)-phospho-L-histidyl/L-threonyl-[pyruvate, phosphate dikinase] + diphosphate. Its function is as follows. Bifunctional serine/threonine kinase and phosphorylase involved in the regulation of the pyruvate, phosphate dikinase (PPDK) by catalyzing its phosphorylation/dephosphorylation. This is Putative pyruvate, phosphate dikinase regulatory protein from Nitrobacter winogradskyi (strain ATCC 25391 / DSM 10237 / CIP 104748 / NCIMB 11846 / Nb-255).